The chain runs to 61 residues: Photosystem II reaction center X protein (61 aa).

The chain crosses the membrane as a helical span at residues 26–46 (IGSFIAAALLIVIPATAFLIF).

The protein belongs to the PsbX family. Type 2 subfamily. In terms of assembly, PSII consists of a core antenna complex that captures photons, and an electron transfer chain that converts photonic excitation into a charge separation. PSII forms dimeric complexes.

Its subcellular location is the cellular thylakoid membrane. Involved in the binding and/or turnover of quinones at the Q(B) site of Photosystem II. In Prochlorococcus marinus (strain MIT 9215), this protein is Photosystem II reaction center X protein.